Here is a 502-residue protein sequence, read N- to C-terminus: Maturase K (502 aa).

Belongs to the intron maturase 2 family. MatK subfamily.

The protein localises to the plastid. Its subcellular location is the chloroplast. Functionally, usually encoded in the trnK tRNA gene intron. Probably assists in splicing its own and other chloroplast group II introns. The protein is Maturase K of Brassica campestris (Field mustard).